The primary structure comprises 129 residues: Large ribosomal subunit protein bL12c (129 aa).

It belongs to the bacterial ribosomal protein bL12 family. In terms of assembly, homodimer. Part of the ribosomal stalk of the 50S ribosomal subunit. Forms a multimeric L10(L12)X complex, where L10 forms an elongated spine to which 2 to 4 L12 dimers bind in a sequential fashion. Binds GTP-bound translation factors.

Its subcellular location is the plastid. The protein resides in the chloroplast. Functionally, forms part of the ribosomal stalk which helps the ribosome interact with GTP-bound translation factors. Is thus essential for accurate translation. The chain is Large ribosomal subunit protein bL12c from Pyropia yezoensis (Susabi-nori).